The following is a 133-amino-acid chain: Transmembrane protein 60 (133 aa).

Helical transmembrane passes span 5-25, 35-55, 78-98, and 110-130; these read LAQR…MLVL, WFLI…LLIV, AWYL…CAKL, and FIPL…NVFF.

The protein resides in the membrane. In Homo sapiens (Human), this protein is Transmembrane protein 60 (TMEM60).